The primary structure comprises 382 residues: RNA exonuclease 3 (382 aa).

In terms of domain architecture, Exonuclease spans 223–369; the sequence is VLALDCEMAY…EDAIAAMDVV (147 aa).

The protein belongs to the REXO1/REXO3 family.

It localises to the cytoplasm. Its subcellular location is the nucleus. In terms of biological role, 3' to 5' exoribonuclease required for proper 3' end maturation of MRP RNA and of the U5L snRNA. This chain is RNA exonuclease 3 (REX3), found in Eremothecium gossypii (strain ATCC 10895 / CBS 109.51 / FGSC 9923 / NRRL Y-1056) (Yeast).